The following is a 266-amino-acid chain: Aquaporin TIP3-2 (266 aa).

Transmembrane regions (helical) follow at residues A29–L49 and G66–V86. Residues N94–A96 carry the NPA 1 motif. The next 3 helical transmembrane spans lie at L109–L129, A153–V173, and L180–G200. Residues N208–A210 carry the NPA 2 motif. A helical membrane pass occupies residues Y228 to I248.

Belongs to the MIP/aquaporin (TC 1.A.8) family. TIP (TC 1.A.8.10) subfamily.

Its subcellular location is the vacuole membrane. In terms of biological role, aquaporins facilitate the transport of water and small neutral solutes across cell membranes. This Zea mays (Maize) protein is Aquaporin TIP3-2 (TIP3-2).